A 233-amino-acid chain; its full sequence is EEF1A lysine methyltransferase 2 (233 aa).

Belongs to the class I-like SAM-binding methyltransferase superfamily. EFM4 family.

It localises to the cytoplasm. It is found in the nucleus. It carries out the reaction L-lysyl-[protein] + 3 S-adenosyl-L-methionine = N(6),N(6),N(6)-trimethyl-L-lysyl-[protein] + 3 S-adenosyl-L-homocysteine + 3 H(+). Functionally, protein-lysine methyltransferase that selectively catalyzes the trimethylation of EEF1A at 'Lys-318'. The protein is EEF1A lysine methyltransferase 2 of Danio rerio (Zebrafish).